Reading from the N-terminus, the 173-residue chain is MIREEEVFKIGQFAKPHGIKGELSLVTNSDVLEDAEDPYIVCEMDGILVPFFVEDFRYKTDTVVLVKLEDVNSEEDARMFVGKEVFYPLDAVDEEDLVGDMTWDSFIGYTVTDVQKGYLGEITDVDETTINVLLRVDHKGEELLIPAVEELITEADHEARSLTVSLPEGLIDL.

In terms of domain architecture, PRC barrel spans 98 to 170 (VGDMTWDSFI…SLTVSLPEGL (73 aa)).

It belongs to the RimM family. Binds ribosomal protein uS19.

Its subcellular location is the cytoplasm. In terms of biological role, an accessory protein needed during the final step in the assembly of 30S ribosomal subunit, possibly for assembly of the head region. Essential for efficient processing of 16S rRNA. May be needed both before and after RbfA during the maturation of 16S rRNA. It has affinity for free ribosomal 30S subunits but not for 70S ribosomes. This Parabacteroides distasonis (strain ATCC 8503 / DSM 20701 / CIP 104284 / JCM 5825 / NCTC 11152) protein is Ribosome maturation factor RimM.